Here is a 542-residue protein sequence, read N- to C-terminus: MPAKDVIFGDCARLRLMEGVNTLTDAVKVTLGPKGRNVVLERSYGSPAVTKDGVTVAKDIELRDRLQNMGAQMVKEVAAKTSDNAGDGTTTATVLAQSIVREGMRYVASGVNPMDIKRGIDQAVSSAVMELKKISRPCTTGKEIAQVGSVSANNDRTVGEMIAEAMNKVGKEGVITVEDGKSLADELEVVEGMQFDRGYLSPYFINNPDRQVAVLDSPFVLLCEKKVASIRDLLPIMERVAKAGRPLLIVAEDVEGEALATLVVNNARGILKAAAVKAPGFGDRRKAMLQDIAILTGGHVVSEETGLSLEKVSLPELGQAKRAEVAKDTTTIIDGAGDAKAINARIKHIRLQIEEAASDYDKEKLQERVAKLAGGVAVIRVGAATEVEMKEKKARVEDALHATRAAVEEGIVPGGGVALIRARNAISNLRCDNPDQDAGIRIVLRAMEEPLRQIVANGGEEASVVASSVASGKSISYGYNAAMRVYGDLMDAGVVDPTKVTRSALQNAASVAGLMLTTDVAVCDSPKREEAAPTQPVHGGVG.

ATP contacts are provided by residues 30–33, K51, 87–91, G415, 480–482, and D496; these read TLGP, DGTTT, and NAA.

Belongs to the chaperonin (HSP60) family. Forms a cylinder of 14 subunits composed of two heptameric rings stacked back-to-back. Interacts with the co-chaperonin GroES.

It localises to the cytoplasm. It catalyses the reaction ATP + H2O + a folded polypeptide = ADP + phosphate + an unfolded polypeptide.. Functionally, together with its co-chaperonin GroES, plays an essential role in assisting protein folding. The GroEL-GroES system forms a nano-cage that allows encapsulation of the non-native substrate proteins and provides a physical environment optimized to promote and accelerate protein folding. The protein is Chaperonin GroEL of Tremblaya princeps.